A 377-amino-acid chain; its full sequence is GTP 3',8-cyclase (377 aa).

The interval 1-29 (MTTRLYLSPTPPRNDREGASKSTSASIKH) is disordered. In terms of domain architecture, Radical SAM core spans 45 to 271 (RFGRIARDLR…FTLSPAKEPR (227 aa)). A GTP-binding site is contributed by arginine 54. 2 residues coordinate [4Fe-4S] cluster: cysteine 61 and cysteine 65. Tyrosine 67 provides a ligand contact to S-adenosyl-L-methionine. Cysteine 68 lines the [4Fe-4S] cluster pocket. Arginine 105 provides a ligand contact to GTP. Residue glycine 109 coordinates S-adenosyl-L-methionine. Threonine 140 is a GTP binding site. S-adenosyl-L-methionine is bound at residue serine 164. Residue lysine 201 coordinates GTP. Residue methionine 235 participates in S-adenosyl-L-methionine binding. [4Fe-4S] cluster-binding residues include cysteine 304 and cysteine 307. 309–311 (RSR) provides a ligand contact to GTP. [4Fe-4S] cluster is bound at residue cysteine 321.

This sequence belongs to the radical SAM superfamily. MoaA family. As to quaternary structure, monomer and homodimer. [4Fe-4S] cluster is required as a cofactor.

It catalyses the reaction GTP + AH2 + S-adenosyl-L-methionine = (8S)-3',8-cyclo-7,8-dihydroguanosine 5'-triphosphate + 5'-deoxyadenosine + L-methionine + A + H(+). It participates in cofactor biosynthesis; molybdopterin biosynthesis. Functionally, catalyzes the cyclization of GTP to (8S)-3',8-cyclo-7,8-dihydroguanosine 5'-triphosphate. This is GTP 3',8-cyclase from Corynebacterium glutamicum (strain R).